The primary structure comprises 149 residues: D-aminoacyl-tRNA deacylase (149 aa).

The Gly-cisPro motif, important for rejection of L-amino acids signature appears at 137–138 (GP).

Belongs to the DTD family. As to quaternary structure, homodimer.

Its subcellular location is the cytoplasm. The enzyme catalyses glycyl-tRNA(Ala) + H2O = tRNA(Ala) + glycine + H(+). The catalysed reaction is a D-aminoacyl-tRNA + H2O = a tRNA + a D-alpha-amino acid + H(+). In terms of biological role, an aminoacyl-tRNA editing enzyme that deacylates mischarged D-aminoacyl-tRNAs. Also deacylates mischarged glycyl-tRNA(Ala), protecting cells against glycine mischarging by AlaRS. Acts via tRNA-based rather than protein-based catalysis; rejects L-amino acids rather than detecting D-amino acids in the active site. By recycling D-aminoacyl-tRNA to D-amino acids and free tRNA molecules, this enzyme counteracts the toxicity associated with the formation of D-aminoacyl-tRNA entities in vivo and helps enforce protein L-homochirality. This Clostridium botulinum (strain Loch Maree / Type A3) protein is D-aminoacyl-tRNA deacylase.